Consider the following 410-residue polypeptide: Elongation factor Tu, chloroplastic (410 aa).

One can recognise a tr-type G domain in the interval 10 to 213; the sequence is KPHLNIGTIG…TVDEYIPTPK (204 aa). The interval 19–26 is G1; the sequence is GHVDHGKT. GTP is bound at residue 19-26; sequence GHVDHGKT. T26 contacts Mg(2+). Residues 60–64 are G2; that stretch reads GITIN. A G3 region spans residues 81-84; that stretch reads DCPG. GTP-binding positions include 81 to 85 and 136 to 139; these read DCPGH and NKAD. A G4 region spans residues 136–139; that stretch reads NKAD. Residues 174-176 are G5; that stretch reads SAI.

This sequence belongs to the TRAFAC class translation factor GTPase superfamily. Classic translation factor GTPase family. EF-Tu/EF-1A subfamily.

The protein localises to the plastid. The protein resides in the chloroplast. It carries out the reaction GTP + H2O = GDP + phosphate + H(+). Its function is as follows. GTP hydrolase that promotes the GTP-dependent binding of aminoacyl-tRNA to the A-site of ribosomes during protein biosynthesis. The sequence is that of Elongation factor Tu, chloroplastic (tufA) from Codium fragile (Dead man's fingers).